The following is a 197-amino-acid chain: Probable nicotinate-nucleotide adenylyltransferase (197 aa).

This sequence belongs to the NadD family.

The catalysed reaction is nicotinate beta-D-ribonucleotide + ATP + H(+) = deamido-NAD(+) + diphosphate. It functions in the pathway cofactor biosynthesis; NAD(+) biosynthesis; deamido-NAD(+) from nicotinate D-ribonucleotide: step 1/1. In terms of biological role, catalyzes the reversible adenylation of nicotinate mononucleotide (NaMN) to nicotinic acid adenine dinucleotide (NaAD). The chain is Probable nicotinate-nucleotide adenylyltransferase from Neisseria meningitidis serogroup C (strain 053442).